The chain runs to 304 residues: Acetylglutamate kinase (304 aa).

Substrate is bound by residues 75 to 76 (GG), Arg97, and Asn196.

Belongs to the acetylglutamate kinase family. ArgB subfamily.

It is found in the cytoplasm. The catalysed reaction is N-acetyl-L-glutamate + ATP = N-acetyl-L-glutamyl 5-phosphate + ADP. The protein operates within amino-acid biosynthesis; L-arginine biosynthesis; N(2)-acetyl-L-ornithine from L-glutamate: step 2/4. In terms of biological role, catalyzes the ATP-dependent phosphorylation of N-acetyl-L-glutamate. The chain is Acetylglutamate kinase from Corynebacterium urealyticum (strain ATCC 43042 / DSM 7109).